Here is a 110-residue protein sequence, read N- to C-terminus: UPF0122 protein RBAM_015800 (110 aa).

The protein belongs to the UPF0122 family.

Its function is as follows. Might take part in the signal recognition particle (SRP) pathway. This is inferred from the conservation of its genetic proximity to ftsY/ffh. May be a regulatory protein. The sequence is that of UPF0122 protein RBAM_015800 from Bacillus velezensis (strain DSM 23117 / BGSC 10A6 / LMG 26770 / FZB42) (Bacillus amyloliquefaciens subsp. plantarum).